The sequence spans 524 residues: Probable 1,3-beta-glucanosyltransferase GAS3 (524 aa).

A signal peptide spans 1 to 21; that stretch reads MQLSKSILLAALAATPSLVNA. A disulfide bridge links Cys-78 with Cys-107. 3 residues coordinate (1,3-beta-D-glucosyl)n: Tyr-96, Asn-168, and Glu-169. Glu-169 acts as the Proton donor in catalysis. The N-linked (GlcNAc...) asparagine glycan is linked to Asn-201. (1,3-beta-D-glucosyl)n is bound by residues Asp-212 and Arg-217. 2 cysteine pairs are disulfide-bonded: Cys-226–Cys-369 and Cys-254–Cys-286. N-linked (GlcNAc...) asparagine glycosylation is present at Asn-269. The Nucleophile role is filled by Glu-283. Position 315 (Tyr-315) interacts with (1,3-beta-D-glucosyl)n. N-linked (GlcNAc...) asparagine glycans are attached at residues Asn-350, Asn-385, Asn-404, and Asn-422. The tract at residues 461–498 is disordered; the sequence is TSQSSSRSLTSSTSPSSSTGSSSSTGSSSASSSSKSKG. Gly-498 carries GPI-anchor amidated glycine lipidation. Residues 499–524 constitute a propeptide, removed in mature form; the sequence is VGNIVNVSFSQSGYLALFAGLISALL.

The protein belongs to the glycosyl hydrolase 72 family. In terms of processing, the GPI-anchor is attached to the protein in the endoplasmic reticulum and serves to target the protein to the cell surface. There, the glucosamine-inositol phospholipid moiety is cleaved off and the GPI-modified mannoprotein is covalently attached via its lipidless GPI glycan remnant to the 1,6-beta-glucan of the outer cell wall layer. N-glycosylated.

The protein localises to the secreted. The protein resides in the cell wall. It is found in the membrane. Functionally, splits internally a 1,3-beta-glucan molecule and transfers the newly generated reducing end (the donor) to the non-reducing end of another 1,3-beta-glucan molecule (the acceptor) forming a 1,3-beta linkage, resulting in the elongation of 1,3-beta-glucan chains in the cell wall. Involved in cell wall biosynthesis and morphogenesis. The sequence is that of Probable 1,3-beta-glucanosyltransferase GAS3 (GAS3) from Saccharomyces cerevisiae (strain ATCC 204508 / S288c) (Baker's yeast).